The chain runs to 497 residues: Glycerol kinase (497 aa).

Residue Thr12 participates in ADP binding. Residues Thr12, Thr13, and Ser14 each coordinate ATP. Thr12 lines the sn-glycerol 3-phosphate pocket. Arg16 lines the ADP pocket. The sn-glycerol 3-phosphate site is built by Arg82, Glu83, Tyr134, and Asp243. The glycerol site is built by Arg82, Glu83, Tyr134, Asp243, and Gln244. ADP-binding residues include Thr265 and Gly308. 4 residues coordinate ATP: Thr265, Gly308, Gln312, and Gly411. Gly411 is an ADP binding site.

This sequence belongs to the FGGY kinase family.

It catalyses the reaction glycerol + ATP = sn-glycerol 3-phosphate + ADP + H(+). It functions in the pathway polyol metabolism; glycerol degradation via glycerol kinase pathway; sn-glycerol 3-phosphate from glycerol: step 1/1. With respect to regulation, inhibited by fructose 1,6-bisphosphate (FBP). Functionally, key enzyme in the regulation of glycerol uptake and metabolism. Catalyzes the phosphorylation of glycerol to yield sn-glycerol 3-phosphate. The sequence is that of Glycerol kinase from Sinorhizobium fredii (strain NBRC 101917 / NGR234).